Here is a 1072-residue protein sequence, read N- to C-terminus: Zinc finger MIZ domain-containing protein 1 (1072 aa).

Positions 1 to 120 are sufficient for transactivation activity; sufficient for interaction with NOTCH1; it reads MNSMDRHIQQ…HQKSRQNDPP (120 aa). Residue lysine 91 forms a Glycyl lysine isopeptide (Lys-Gly) (interchain with G-Cter in SUMO2) linkage. Disordered stretches follow at residues 112–141 and 362–538; these read QKSRQNDPPGKLPMQPPLSSMSSMKPTLSH and TPSG…PYLS. Residues 128–141 show a composition bias toward low complexity; that stretch reads PLSSMSSMKPTLSH. Polar residues predominate over residues 419–436; it reads YGNQQYGPNSQFPTQPGQ. Pro residues predominate over residues 437–446; that stretch reads YPTPNPPRPL. The segment covering 489–501 has biased composition (low complexity); the sequence is SSGSSYSSYSQGS. The span at 517–528 shows a compositional bias: pro residues; sequence SPVPGNPTPPMT. The segment at 734-815 adopts an SP-RING-type zinc-finger fold; the sequence is GEDGVEQTAI…MWGILNAIQH (82 aa). Positions 765, 767, 788, and 791 each coordinate Zn(2+). Glycyl lysine isopeptide (Lys-Gly) (interchain with G-Cter in SUMO2) cross-links involve residues lysine 841 and lysine 850. The segment at 844–1072 is transactivation domain; that stretch reads PDGIPSKRFK…DDLLSLFENN (229 aa). Over residues 875–886 the composition is skewed to pro residues; the sequence is GPSPYPLPPPPG. A disordered region spans residues 875 to 1072; that stretch reads GPSPYPLPPP…DDLLSLFENN (198 aa). 2 stretches are compositionally biased toward polar residues: residues 888–902 and 958–968; these read TSSNDYSSQGNNYQG and SSDQPHPSIQQ. Residues 988–1001 are compositionally biased toward pro residues; that stretch reads APPPSQPPRQPPQA. Over residues 1045 to 1072 the composition is skewed to low complexity; that stretch reads PDELLSYLDPPDLPSNSNDDLLSLFENN.

In terms of assembly, interacts with AR, but not with ESR1, NR3C1, PGR, THRB nor VDR. Interacts with NOTCH1 and RBPJ. Interacts with SMARCA4. Interacts (via SP-RING-type domain) with SMAD3 and SMAD4 (via MH2 domain). Expressed in brain.

It is found in the nucleus. It localises to the nucleoplasm. Its subcellular location is the cytoplasm. In terms of biological role, acts as a transcriptional coactivator. Increases ligand-dependent transcriptional activity of AR and promotes AR sumoylation. The stimulation of AR activity is dependent upon sumoylation. Also functions as a transcriptional coactivator in the TGF-beta signaling pathway by increasing the activity of the SMAD3/SMAD4 transcriptional complex. Involved in transcriptional activation of a subset of NOTCH1 target genes including MYC. Involved in thymocyte and T cell development. Involved in the regulation of postmitotic positioning of pyramidal neurons in the developing cerebral cortex. This is Zinc finger MIZ domain-containing protein 1 (Zmiz1) from Mus musculus (Mouse).